A 70-amino-acid chain; its full sequence is uncharacterized protein (70 aa).

The next 2 membrane-spanning stretches (helical) occupy residues tyrosine 13–phenylalanine 33 and glutamine 39–isoleucine 59.

Its subcellular location is the cell membrane. This is an uncharacterized protein from Escherichia coli O6:H1 (strain CFT073 / ATCC 700928 / UPEC).